Consider the following 406-residue polypeptide: Putative gustatory receptor 59f (406 aa).

Topologically, residues 1–36 (MRSSATKGAKLKNSPRERLSSFNPQYAERYKELYRT) are cytoplasmic. The helical transmembrane segment at 37-57 (LFWLLLISVLANTAPITILPG) threads the bilayer. Over 58–69 (CPNRFYRLVHLS) the chain is Extracellular. Residues 70–90 (WMILWYGLFVLGSYWEFVLVT) form a helical membrane-spanning segment. Residues 91–99 (TQRVSLDRY) lie on the Cytoplasmic side of the membrane. Residues 100-120 (LNAIESAIYVVHIFSIMLLTW) form a helical membrane-spanning segment. Residues 121 to 154 (QCRNWAPKLMTNIVTSDLNRAYTIDCNRTKRFIR) are Extracellular-facing. Asparagine 147 is a glycosylation site (N-linked (GlcNAc...) asparagine). The helical transmembrane segment at 155–175 (LQLFLVGIFACLAIFFNIWTH) threads the bilayer. At 176–189 (KFVVYRSILSINSY) the chain is on the cytoplasmic side. A helical transmembrane segment spans residues 190-210 (VMPNIISSISFAQYYLLLQGI). Over 211-259 (AWRQRRLTEGLERELTHLHSPRISEVQKIRMHHANLIDFTKAVNRTFQY) the chain is Extracellular. The N-linked (GlcNAc...) asparagine glycan is linked to asparagine 254. A helical membrane pass occupies residues 260 to 280 (SILLLFVGCFLNFNLVLFLVY). The Cytoplasmic segment spans residues 281 to 364 (QGIENPSMAD…RQHVVCGVIN (84 aa)). Residues 365 to 385 (LDLKFLTTLLVASADFFIFLL) traverse the membrane as a helical segment. Residues 386 to 406 (QYDVTYEALSKSVQGNVTRYK) are Extracellular-facing. Asparagine 401 carries an N-linked (GlcNAc...) asparagine glycan.

The protein belongs to the insect chemoreceptor superfamily. Gustatory receptor (GR) family. Gr10a subfamily. As to expression, expressed in the adult abdomen and wing. In larvae, is expressed in neurons of the terminal external chemosensory organ.

Its subcellular location is the cell membrane. Functionally, probable gustatory receptor which mediates acceptance or avoidance behavior, depending on its substrates. The protein is Putative gustatory receptor 59f (Gr59f) of Drosophila melanogaster (Fruit fly).